We begin with the raw amino-acid sequence, 30 residues long: Alpha-defensin PhD-4 (30 aa).

Disulfide bonds link C2–C30, C4–C19, and C9–C29.

Its subcellular location is the secreted. In terms of biological role, in low salt conditions, has antibacterial activity against the Gram-negative bacterium E.coli ML35p (MIC=2.4 uM), the Gram-positive bacteria L.monocytogenes EGD (MIC=2.2 uM) and methicillin-resistant S.aureus ATCC 33591 (MIC=3.5 uM), and the fungus C.albicans 820 (MIC=3.9 uM). At high physiological salt concentrations the antimicrobial activity decreases significantly: E.coli ML35p (MIC=7.1 uM), L.monocytogenes EGD (MIC=1.8 uM), S.aureus ATCC 33591 (MIC=&gt;50 uM), and C.albicans 820 (MIC=&gt;50 uM). This Papio hamadryas (Hamadryas baboon) protein is Alpha-defensin PhD-4.